The chain runs to 603 residues: Beta-glucuronidase (603 aa).

The D-glucuronate site is built by Asp163 and Asn412. Glu413 serves as the catalytic Proton donor. D-glucuronate-binding residues include Asn466, Tyr472, Glu504, Trp549, and Lys568. Glu504 (nucleophile) is an active-site residue. The N-K motif motif lies at 566–568; the sequence is NKK.

It belongs to the glycosyl hydrolase 2 family. Homotetramer.

The enzyme catalyses a beta-D-glucuronoside + H2O = D-glucuronate + an alcohol. The catalysed reaction is 4-methylumbelliferone beta-D-glucuronate + H2O = 4-methylumbelliferone + D-glucuronate. Its activity is regulated as follows. Potently inhibited by a set of synthetic compounds like thio-urea derivatives and analogs, and uronic isofagomine (UIFG) derivatives. Inhibitors of gut microbial beta-glucuronidases block the reactivation of glucuronidated cancer drugs, and thereby alleviate drug-induced GI toxicity. Functionally, displays beta-glucuronidase activity with the artificial substrate p-nitrophenyl-beta-D-glucuronide (PNPG) and with 4-methylumbelliferyl-glucuronide. Is likely capable of scavenging glucuronate from a range of chemically distinct xenobiotic and endobiotic glucuronides present in the gastrointestinal (GI) tract, to be able to utilize these diverse sources of carbon. As part of the GI microbiome, this enzyme is able to reactivate glucuronide drug conjugates, such reactivated compounds can significantly damage the GI tract. This is Beta-glucuronidase (uidA) from Escherichia coli (strain K12).